The following is a 202-amino-acid chain: Holliday junction branch migration complex subunit RuvA (202 aa).

The segment at 1-64 (MIGRLRGSLA…EDAHLLYGFY (64 aa)) is domain I. The domain II stretch occupies residues 65 to 143 (EKRERELFRE…AWESLPGTFT (79 aa)). Residues 144 to 153 (LVSNGPNQAE) form a flexible linker region. A domain III region spans residues 154-202 (PVASAESDAVSALISLGYKPQEASKAVSAIKEKDLSSADLIRRALKGMG).

This sequence belongs to the RuvA family. Homotetramer. Forms an RuvA(8)-RuvB(12)-Holliday junction (HJ) complex. HJ DNA is sandwiched between 2 RuvA tetramers; dsDNA enters through RuvA and exits via RuvB. An RuvB hexamer assembles on each DNA strand where it exits the tetramer. Each RuvB hexamer is contacted by two RuvA subunits (via domain III) on 2 adjacent RuvB subunits; this complex drives branch migration. In the full resolvosome a probable DNA-RuvA(4)-RuvB(12)-RuvC(2) complex forms which resolves the HJ.

The protein localises to the cytoplasm. Its function is as follows. The RuvA-RuvB-RuvC complex processes Holliday junction (HJ) DNA during genetic recombination and DNA repair, while the RuvA-RuvB complex plays an important role in the rescue of blocked DNA replication forks via replication fork reversal (RFR). RuvA specifically binds to HJ cruciform DNA, conferring on it an open structure. The RuvB hexamer acts as an ATP-dependent pump, pulling dsDNA into and through the RuvAB complex. HJ branch migration allows RuvC to scan DNA until it finds its consensus sequence, where it cleaves and resolves the cruciform DNA. This is Holliday junction branch migration complex subunit RuvA from Pseudomonas savastanoi pv. phaseolicola (strain 1448A / Race 6) (Pseudomonas syringae pv. phaseolicola (strain 1448A / Race 6)).